Consider the following 285-residue polypeptide: Foldase protein PrsA 2 (285 aa).

Positions 1–20 (MRGKHIFIITALISILMLAA) are cleaved as a signal peptide. Cysteine 21 is lipidated: N-palmitoyl cysteine. Cysteine 21 carries S-diacylglycerol cysteine lipidation. Positions 134-224 (KPEIKASHIL…NGYHIIKLTG (91 aa)) constitute a PpiC domain.

It belongs to the PrsA family.

Its subcellular location is the cell membrane. The catalysed reaction is [protein]-peptidylproline (omega=180) = [protein]-peptidylproline (omega=0). Plays a major role in protein secretion by helping the post-translocational extracellular folding of several secreted proteins. Important for the secretion of the protective antigen. The three PsrA proteins in this organism show different but overlapping substrate specificities. The polypeptide is Foldase protein PrsA 2 (prsA2) (Bacillus anthracis).